Consider the following 173-residue polypeptide: 2-C-methyl-D-erythritol 2,4-cyclodiphosphate synthase (173 aa).

A divalent metal cation contacts are provided by Asp-17 and His-19. 4-CDP-2-C-methyl-D-erythritol 2-phosphate-binding positions include 17 to 19 (DVH) and 49 to 50 (HS). His-57 provides a ligand contact to a divalent metal cation. Residues 76 to 80 (FPNTD), 147 to 150 (TTTE), Phe-154, and Arg-157 contribute to the 4-CDP-2-C-methyl-D-erythritol 2-phosphate site.

The protein belongs to the IspF family. As to quaternary structure, homotrimer. A divalent metal cation is required as a cofactor.

It carries out the reaction 4-CDP-2-C-methyl-D-erythritol 2-phosphate = 2-C-methyl-D-erythritol 2,4-cyclic diphosphate + CMP. It participates in isoprenoid biosynthesis; isopentenyl diphosphate biosynthesis via DXP pathway; isopentenyl diphosphate from 1-deoxy-D-xylulose 5-phosphate: step 4/6. Its function is as follows. Involved in the biosynthesis of isopentenyl diphosphate (IPP) and dimethylallyl diphosphate (DMAPP), two major building blocks of isoprenoid compounds. Catalyzes the conversion of 4-diphosphocytidyl-2-C-methyl-D-erythritol 2-phosphate (CDP-ME2P) to 2-C-methyl-D-erythritol 2,4-cyclodiphosphate (ME-CPP) with a corresponding release of cytidine 5-monophosphate (CMP). This chain is 2-C-methyl-D-erythritol 2,4-cyclodiphosphate synthase, found in Ehrlichia canis (strain Jake).